A 123-amino-acid polypeptide reads, in one-letter code: ATP synthase epsilon chain (123 aa).

This sequence belongs to the ATPase epsilon chain family. In terms of assembly, F-type ATPases have 2 components, CF(1) - the catalytic core - and CF(0) - the membrane proton channel. CF(1) has five subunits: alpha(3), beta(3), gamma(1), delta(1), epsilon(1). CF(0) has three main subunits: a, b and c.

It localises to the cell inner membrane. In terms of biological role, produces ATP from ADP in the presence of a proton gradient across the membrane. The sequence is that of ATP synthase epsilon chain from Helicobacter pylori (strain G27).